The sequence spans 2324 residues: Myomegalin (2324 aa).

Coiled-coil stretches lie at residues 41 to 132 (REDV…LVEA), 158 to 205 (QVKL…LLEE), 238 to 288 (DSHL…SLKE), and 348 to 638 (LFCS…NKQA). Disordered stretches follow at residues 72-96 (TWAD…EPQQ) and 205-240 (EPGG…SDSH). The span at 85–96 (AELRRQVEEPQQ) shows a compositional bias: basic and acidic residues. Residues 219–238 (PTQQKPDLNETPTTQPSVSD) are compositionally biased toward polar residues. Residues 701-747 (PAGATSVGPHHGEQTDQGSTQMPSRDDSTSLTAREEASIPRSTLGDS) are disordered. A Phosphothreonine modification is found at Thr705. Residues 724–738 (SRDDSTSLTAREEAS) show a composition bias toward basic and acidic residues. Coiled-coil stretches lie at residues 745-822 (GDSD…QLVD), 855-923 (ENRR…EEVL), and 1011-1043 (LRAE…GFSS). 2 disordered regions span residues 1155 to 1182 (LPSS…SLKL) and 1195 to 1216 (NKSQ…STKH). Coiled-coil stretches lie at residues 1213–1241 (STKH…SEAT), 1346–1384 (TSDD…LSAT), and 1430–1455 (GLQA…PKTG). 6 disordered regions span residues 1540–1559 (TDRL…KEEA), 1589–1610 (RFSS…SSTS), 1628–1685 (YTHY…IPKP), 1742–1773 (APPT…SPAR), 1857–1877 (LSST…GLES), and 2081–2140 (NQQP…TPPK). In terms of domain architecture, Olduvai spans 1550 to 1641 (KDHKSEKEEA…EEKKPSPSNS (92 aa)). Composition is skewed to low complexity over residues 1591–1610 (SSPP…SSTS) and 1637–1646 (SPSNSAASAS). Polar residues predominate over residues 1743–1767 (PPTSTSTLLSNHTEASSPRYSNPAQ). A coiled-coil region spans residues 1821–2056 (GADLLEEHLG…LRLQLEQQMD (236 aa)). 2 stretches are compositionally biased toward polar residues: residues 2081–2090 (NQQPPFQGSA) and 2108–2135 (PSNS…SAAT). Residues 2248–2274 (EEGNLMEKELLDLRAQVSQQQQLLQST) are a coiled coil.

In terms of assembly, interacts with PDE4D. May interact with MAPRE1 and MAPRE3. May form a pericentrosomal complex with AKAP9, CDK5RAP2 and EB1/MAPRE1 in an isoform-specific manner; within this complex, may mediate MAPRE1-binding to CDK5RAP2. Interaction with AKAP9 stabilizes both proteins. May interact with CAMSAP2 in an isoform-specific manner; this interaction is much stronger in the presence of AKAP9. In complex with AKAP9, recruits CAMSAP2 to the Golgi apparatus. May interact with unglycosylated LGALS3BP in an isoform-specific manner; this interaction may connect the pericentrosomal complex to the gamma-tubulin ring complex (gamma-TuRC) to promote microtubule assembly and acetylation. As to expression, abundantly expressed in heart and skeletal muscle and to a lower extent in brain, lung and liver. Expressed in heart, skeletal muscle and testis (at protein level).

The protein localises to the cytoplasm. It is found in the cytoskeleton. The protein resides in the microtubule organizing center. It localises to the centrosome. Its subcellular location is the golgi apparatus. In terms of biological role, functions as an anchor sequestering components of the cAMP-dependent pathway to Golgi and/or centrosomes. May participate in microtubule dynamics, promoting microtubule assembly, in an isoform-specific manner. Depending upon the cell context, may act at the level of the Golgi apparatus or that of the centrosome. In complex with AKAP9, recruits CAMSAP2 to the Golgi apparatus and tethers non-centrosomal minus-end microtubules to the Golgi, an important step for polarized cell movement. In complex with AKAP9, EB1/MAPRE1 and CDK5RAP2, contributes to microtubules nucleation and extension from the centrosome to the cell periphery, a crucial process for directed cell migration, mitotic spindle orientation and cell-cycle progression. The sequence is that of Myomegalin (Pde4dip) from Rattus norvegicus (Rat).